A 451-amino-acid polypeptide reads, in one-letter code: Probable multidrug resistance protein NorM (451 aa).

The next 12 helical transmembrane spans lie at G23–I43, A53–L73, L101–P121, L132–A152, V169–G189, L194–L214, W243–M263, T277–V297, L316–A336, L355–L375, V391–L411, and L422–L442.

This sequence belongs to the multi antimicrobial extrusion (MATE) (TC 2.A.66.1) family.

The protein resides in the cell membrane. In terms of biological role, multidrug efflux pump. This chain is Probable multidrug resistance protein NorM (norM), found in Deinococcus radiodurans (strain ATCC 13939 / DSM 20539 / JCM 16871 / CCUG 27074 / LMG 4051 / NBRC 15346 / NCIMB 9279 / VKM B-1422 / R1).